A 471-amino-acid polypeptide reads, in one-letter code: Trigger factor (471 aa).

The 80-residue stretch at 166–245 (DDFITIDINA…LTAVKVRELP (80 aa)) folds into the PPIase FKBP-type domain. The tract at residues 442–471 (AAGVTGEDDDTEAEEERVTVSADDPGAARF) is disordered. A compositionally biased stretch (acidic residues) spans 447–456 (GEDDDTEAEE).

It belongs to the FKBP-type PPIase family. Tig subfamily.

The protein localises to the cytoplasm. It catalyses the reaction [protein]-peptidylproline (omega=180) = [protein]-peptidylproline (omega=0). Involved in protein export. Acts as a chaperone by maintaining the newly synthesized protein in an open conformation. Functions as a peptidyl-prolyl cis-trans isomerase. The sequence is that of Trigger factor from Renibacterium salmoninarum (strain ATCC 33209 / DSM 20767 / JCM 11484 / NBRC 15589 / NCIMB 2235).